A 423-amino-acid chain; its full sequence is N-acylneuraminate cytidylyltransferase B (423 aa).

Substrate contacts are provided by Arg-30, Asn-40, Arg-88, Ser-97, Ser-99, and Gln-120. Arg-178 is an active-site residue.

This sequence belongs to the CMP-NeuNAc synthase family. Homotetramer.

The protein localises to the cytoplasm. The catalysed reaction is an N-acylneuraminate + CTP = a CMP-N-acyl-beta-neuraminate + diphosphate. Its pathway is amino-sugar metabolism; N-acetylneuraminate metabolism. Functionally, catalyzes the activation of 2-keto-3-deoxy-D-glycero-D-galacto-nononic acid (KDN) to cytidine 5'-monophosphate 2-keto-3-deoxy-D-glycero-D-galacto-nononic acid (CMP-KDN), a substrate required for the addition of sialic acid. Also has weak activity towards N-acetylneuraminic acid (NeuNAc) and N-glycolylneuraminic acid (Neu5Gc). The sequence is that of N-acylneuraminate cytidylyltransferase B from Danio rerio (Zebrafish).